Here is a 35-residue protein sequence, read N- to C-terminus: Photosystem II reaction center protein M (35 aa).

The chain crosses the membrane as a helical span at residues 5–25 (IFGLTATALFIIIPTSFLLIL).

The protein belongs to the PsbM family. As to quaternary structure, PSII is composed of 1 copy each of membrane proteins PsbA, PsbB, PsbC, PsbD, PsbE, PsbF, PsbH, PsbI, PsbJ, PsbK, PsbL, PsbM, PsbT, PsbX, PsbY, PsbZ, Psb30/Ycf12, at least 3 peripheral proteins of the oxygen-evolving complex and a large number of cofactors. It forms dimeric complexes.

It localises to the plastid. It is found in the chloroplast thylakoid membrane. In terms of biological role, one of the components of the core complex of photosystem II (PSII). PSII is a light-driven water:plastoquinone oxidoreductase that uses light energy to abstract electrons from H(2)O, generating O(2) and a proton gradient subsequently used for ATP formation. It consists of a core antenna complex that captures photons, and an electron transfer chain that converts photonic excitation into a charge separation. This subunit is found at the monomer-monomer interface. The chain is Photosystem II reaction center protein M from Tetradesmus obliquus (Green alga).